The primary structure comprises 335 residues: DNA-directed RNA polymerase subunit alpha (335 aa).

The alpha N-terminal domain (alpha-NTD) stretch occupies residues 1–233 (MTRTANEFLT…QQIAIFVDLQ (233 aa)). The interval 247–335 (VDPILLRPVD…MDDRFAYRSR (89 aa)) is alpha C-terminal domain (alpha-CTD).

The protein belongs to the RNA polymerase alpha chain family. As to quaternary structure, homodimer. The RNAP catalytic core consists of 2 alpha, 1 beta, 1 beta' and 1 omega subunit. When a sigma factor is associated with the core the holoenzyme is formed, which can initiate transcription.

It catalyses the reaction RNA(n) + a ribonucleoside 5'-triphosphate = RNA(n+1) + diphosphate. Its function is as follows. DNA-dependent RNA polymerase catalyzes the transcription of DNA into RNA using the four ribonucleoside triphosphates as substrates. The protein is DNA-directed RNA polymerase subunit alpha of Acinetobacter baylyi (strain ATCC 33305 / BD413 / ADP1).